Consider the following 513-residue polypeptide: MEMAKEQELILVLDFGSQYNQLITRRIREMGVYSELHDHEISIEEIKRMNPKGIILSGGPNSVYEEGSFTIDPEIYNLGIPVLGICYGMQLTTKLLGGKVERANEREYGKATINAKSDELFFGLPSEQTVWMSHSDKVIEIPEGFEVIADSPSTNYAAIEDKKRRIYGVQFHPEVRHTEYGNDLLRNFVRRVCNCTGEWTMENFIEIEIEKIRQQVGNRKVLCAMSGGVDSSVVAVLLHKAIGEQLTCIFVDHGLLRKGEGDMVMEQFGEGFDMNIIRVNAQERFMSKLKGVSDPERKRKIIGNEFVYVFDDEAAKLTDVDFLAQGTLYTDVIESGTKTAQTIKSHHNVGGLPEDMEFELIEPINTLFKDEVRALGIELGIPEHLVWRQPFPGPGLGIRVLGEITEDKLEIVRESDAILREVIREEGLERDIWQYFTVLPGIQSVGVMGDYRTYDHTVGIRAVTSIDGMTSDFARIDWEVLQKISSRIVNEVDHVNRVVYDITSKPPSTIEWE.

In terms of domain architecture, Glutamine amidotransferase type-1 spans 9-198; it reads LILVLDFGSQ…VRRVCNCTGE (190 aa). Cys-86 (nucleophile) is an active-site residue. Active-site residues include His-172 and Glu-174. Residues 199 to 388 enclose the GMPS ATP-PPase domain; that stretch reads WTMENFIEIE…LGIPEHLVWR (190 aa). An ATP-binding site is contributed by 226 to 232; sequence SGGVDSS.

As to quaternary structure, homodimer.

The catalysed reaction is XMP + L-glutamine + ATP + H2O = GMP + L-glutamate + AMP + diphosphate + 2 H(+). Its pathway is purine metabolism; GMP biosynthesis; GMP from XMP (L-Gln route): step 1/1. Catalyzes the synthesis of GMP from XMP. This Staphylococcus epidermidis (strain ATCC 12228 / FDA PCI 1200) protein is GMP synthase [glutamine-hydrolyzing].